The chain runs to 141 residues: Zinc finger protein 593 homolog (141 aa).

The tract at residues 1 to 32 (MGRYSGHGGTHTKKKQYKRARSTKNRAKDIDQ) is disordered. Residues 10–25 (THTKKKQYKRARSTKN) show a composition bias toward basic residues. The C2H2-type zinc-finger motif lies at 60–84 (NYCIHCSKHFVTNEDLQSHIKGKPH).

It belongs to the ZNF593/BUD20 C2H2-type zinc-finger protein family. Associates with pre-60S ribosomal particles; released from the pre-60S particle very early in the cytoplasm.

The protein localises to the nucleus. The protein resides in the cytoplasm. Its function is as follows. Involved in pre-60S ribosomal particles maturation by promoting the nuclear export of the 60S ribosome. The chain is Zinc finger protein 593 homolog from Dictyostelium discoideum (Social amoeba).